We begin with the raw amino-acid sequence, 759 residues long: Subtilisin-like protease SBT3.16 (759 aa).

The first 33 residues, 1–33 (MELSSLIVPNNKKHFVVVFIGLVLIFKIALITA), serve as a signal peptide directing secretion. Residues 34 to 119 (ANEKSQIYTV…VTRSKNMKLK (86 aa)) constitute a propeptide, activation peptide. The Inhibitor I9 domain maps to 41–118 (YTVHLGERQH…RVTRSKNMKL (78 aa)). The Peptidase S8 domain occupies 124 to 608 (SDYLGLTSAA…GGLVNPVKVA (485 aa)). The active-site Charge relay system is the D153. N186 and N209 each carry an N-linked (GlcNAc...) asparagine glycan. H229 functions as the Charge relay system in the catalytic mechanism. A glycan (N-linked (GlcNAc...) asparagine) is linked at N371. The Charge relay system role is filled by S539. N632 and N711 each carry an N-linked (GlcNAc...) asparagine glycan.

It belongs to the peptidase S8 family.

It localises to the secreted. The polypeptide is Subtilisin-like protease SBT3.16 (Arabidopsis thaliana (Mouse-ear cress)).